Reading from the N-terminus, the 253-residue chain is 5'-nucleotidase SurE (253 aa).

A divalent metal cation contacts are provided by Asp8, Asp9, Ser40, and Asn93.

This sequence belongs to the SurE nucleotidase family. Requires a divalent metal cation as cofactor.

It localises to the cytoplasm. It carries out the reaction a ribonucleoside 5'-phosphate + H2O = a ribonucleoside + phosphate. Functionally, nucleotidase that shows phosphatase activity on nucleoside 5'-monophosphates. The sequence is that of 5'-nucleotidase SurE from Methylobacterium sp. (strain 4-46).